Here is a 372-residue protein sequence, read N- to C-terminus: Lipoyl synthase, mitochondrial (372 aa).

Residues 1–27 (MSLRCGDAARTLGPRVFGRYFCSPVRP) constitute a mitochondrion transit peptide. [4Fe-4S] cluster-binding residues include C106, C111, C117, C137, C141, C144, and S352. The 220-residue stretch at 122-341 (EYATATATIM…EKVGNELGFH (220 aa)) folds into the Radical SAM core domain.

Belongs to the radical SAM superfamily. Lipoyl synthase family. [4Fe-4S] cluster serves as cofactor.

It is found in the mitochondrion. It carries out the reaction [[Fe-S] cluster scaffold protein carrying a second [4Fe-4S](2+) cluster] + N(6)-octanoyl-L-lysyl-[protein] + 2 oxidized [2Fe-2S]-[ferredoxin] + 2 S-adenosyl-L-methionine + 4 H(+) = [[Fe-S] cluster scaffold protein] + N(6)-[(R)-dihydrolipoyl]-L-lysyl-[protein] + 4 Fe(3+) + 2 hydrogen sulfide + 2 5'-deoxyadenosine + 2 L-methionine + 2 reduced [2Fe-2S]-[ferredoxin]. The protein operates within protein modification; protein lipoylation via endogenous pathway; protein N(6)-(lipoyl)lysine from octanoyl-[acyl-carrier-protein]: step 2/2. In terms of biological role, catalyzes the radical-mediated insertion of two sulfur atoms into the C-6 and C-8 positions of the octanoyl moiety bound to the lipoyl domains of lipoate-dependent enzymes, thereby converting the octanoylated domains into lipoylated derivatives. The sequence is that of Lipoyl synthase, mitochondrial from Homo sapiens (Human).